A 1416-amino-acid chain; its full sequence is DNA-directed RNA polymerase subunit beta' (1416 aa).

Zn(2+)-binding residues include cysteine 71, cysteine 73, cysteine 86, and cysteine 89. Mg(2+) contacts are provided by aspartate 461, aspartate 463, and aspartate 465. 4 residues coordinate Zn(2+): cysteine 815, cysteine 889, cysteine 896, and cysteine 899.

Belongs to the RNA polymerase beta' chain family. The RNAP catalytic core consists of 2 alpha, 1 beta, 1 beta' and 1 omega subunit. When a sigma factor is associated with the core the holoenzyme is formed, which can initiate transcription. Requires Mg(2+) as cofactor. It depends on Zn(2+) as a cofactor.

The enzyme catalyses RNA(n) + a ribonucleoside 5'-triphosphate = RNA(n+1) + diphosphate. In terms of biological role, DNA-dependent RNA polymerase catalyzes the transcription of DNA into RNA using the four ribonucleoside triphosphates as substrates. This Haemophilus influenzae (strain 86-028NP) protein is DNA-directed RNA polymerase subunit beta'.